The chain runs to 683 residues: Elongation factor G 2 (683 aa).

The tr-type G domain maps to 4-279; it reads QQMRNIGIMA…AVVEYLPAPQ (276 aa). Residues 13-20, 77-81, and 131-134 each bind GTP; these read AHVDAGKT, DTPGH, and NKMD.

This sequence belongs to the TRAFAC class translation factor GTPase superfamily. Classic translation factor GTPase family. EF-G/EF-2 subfamily.

It localises to the cytoplasm. Functionally, catalyzes the GTP-dependent ribosomal translocation step during translation elongation. During this step, the ribosome changes from the pre-translocational (PRE) to the post-translocational (POST) state as the newly formed A-site-bound peptidyl-tRNA and P-site-bound deacylated tRNA move to the P and E sites, respectively. Catalyzes the coordinated movement of the two tRNA molecules, the mRNA and conformational changes in the ribosome. The sequence is that of Elongation factor G 2 (fusB) from Treponema pallidum (strain Nichols).